The following is a 761-amino-acid chain: Phosphoribosylformylglycinamidine synthase subunit PurL (761 aa).

His48 is an active-site residue. Residues Tyr51 and Lys90 each contribute to the ATP site. Mg(2+) is bound at residue Glu92. Substrate-binding positions include 93–96 and Arg115; that span reads SHNH. His94 functions as the Proton acceptor in the catalytic mechanism. Asp116 serves as a coordination point for Mg(2+). Residue Gln239 participates in substrate binding. Asp267 serves as a coordination point for Mg(2+). Residue 311-313 participates in substrate binding; sequence ESQ. Asp499 and Gly536 together coordinate ATP. Asn537 contacts Mg(2+). Ser539 serves as a coordination point for substrate.

The protein belongs to the FGAMS family. In terms of assembly, monomer. Part of the FGAM synthase complex composed of 1 PurL, 1 PurQ and 2 PurS subunits.

Its subcellular location is the cytoplasm. The catalysed reaction is N(2)-formyl-N(1)-(5-phospho-beta-D-ribosyl)glycinamide + L-glutamine + ATP + H2O = 2-formamido-N(1)-(5-O-phospho-beta-D-ribosyl)acetamidine + L-glutamate + ADP + phosphate + H(+). Its pathway is purine metabolism; IMP biosynthesis via de novo pathway; 5-amino-1-(5-phospho-D-ribosyl)imidazole from N(2)-formyl-N(1)-(5-phospho-D-ribosyl)glycinamide: step 1/2. Part of the phosphoribosylformylglycinamidine synthase complex involved in the purines biosynthetic pathway. Catalyzes the ATP-dependent conversion of formylglycinamide ribonucleotide (FGAR) and glutamine to yield formylglycinamidine ribonucleotide (FGAM) and glutamate. The FGAM synthase complex is composed of three subunits. PurQ produces an ammonia molecule by converting glutamine to glutamate. PurL transfers the ammonia molecule to FGAR to form FGAM in an ATP-dependent manner. PurS interacts with PurQ and PurL and is thought to assist in the transfer of the ammonia molecule from PurQ to PurL. The sequence is that of Phosphoribosylformylglycinamidine synthase subunit PurL from Thermosynechococcus vestitus (strain NIES-2133 / IAM M-273 / BP-1).